Consider the following 562-residue polypeptide: MSAILSADDLNDFISPGVACIKPVETLPKNESSNSQNPYEVTTEDKVQPENLPPAQISLTDCLACSGCVTSAEAVLISLQSHAEVLNTLDAYPELPLTQNHNGPYTGSSDALDGESRIFVASVSPQVRASLAATYGISEKEATYMIDQFLSGPHGLRAGGKHGSGFSWVVDTNVMRDAILVLTADEVSETLKEPSARAISKDTLPKRPVLSSACPGWICYAEKTHPFVLPHLSRLKSPQALTGTFLKTVLSKALGVPPSRVWHLAIMPCFDKKLEASREELTDVSWSPLDGGVPLTESNKPVRDVDCVITTRELLTLASSRGISLPTLPLKSLAPSYTPHFPDETLNAFLFRKQNGSEQSMEAGTSGGYLHHVLKTFQAKNPGSEIVTQRGRNADVVEYSLMSPGGEPLMKAARYYGFRNIQNLVRKLKPARVSRLPGARVPAASAGGNRRQPISRNSASAGSGTDYAYVEVMACPGGCTNGGGQIRIEDAREASTSTQSVTAVENPSKPTPHEQRAWLARVDEAYFSAESDAEAKWTVRHSPSPSLRGRLGSMKLSSIGLT.

Cys-20 is a binding site for [4Fe-4S] cluster. Positions 28-47 are disordered; it reads PKNESSNSQNPYEVTTEDKV. Polar residues predominate over residues 29–40; sequence KNESSNSQNPYE. 5 residues coordinate [4Fe-4S] cluster: Cys-62, Cys-65, Cys-68, Cys-214, and Cys-269. The interval 439 to 462 is disordered; the sequence is ARVPAASAGGNRRQPISRNSASAG. Positions 452-462 are enriched in polar residues; that stretch reads QPISRNSASAG. Positions 475 and 479 each coordinate [4Fe-4S] cluster. 2 disordered regions span residues 492 to 513 and 541 to 562; these read REAS…PTPH and HSPS…IGLT. The span at 494–505 shows a compositional bias: polar residues; sequence ASTSTQSVTAVE.

It belongs to the NARF family.

Functionally, component of the cytosolic Fe/S protein assembly machinery. Required for maturation of extramitochondrial Fe/S proteins. May play a role in the transfer of pre-assembled Fe/S clusters to target apoproteins. The polypeptide is Cytosolic Fe-S cluster assembly factor nar1 (nar1) (Aspergillus flavus (strain ATCC 200026 / FGSC A1120 / IAM 13836 / NRRL 3357 / JCM 12722 / SRRC 167)).